Consider the following 371-residue polypeptide: Geranylgeranyl transferase type-2 subunit alpha (371 aa).

PFTA repeat units follow at residues 45 to 79 (YSDE…NNYS), 92 to 126 (ILNQ…ELVK), 131 to 165 (NWKY…NMEL), 177 to 211 (INLD…KIYN), and 242 to 276 (LLKN…DDLF).

It belongs to the protein prenyltransferase subunit alpha family. In terms of assembly, heterodimer of an alpha and a beta subunit.

The catalysed reaction is geranylgeranyl diphosphate + L-cysteinyl-[protein] = S-geranylgeranyl-L-cysteinyl-[protein] + diphosphate. Functionally, catalyzes the transfer of a geranyl-geranyl moiety from geranyl-geranyl pyrophosphate to proteins having the C-terminal -XCC or -XCXC, where both cysteines may become modified. Acts on YPT1 and SEC4. In Candida albicans (Yeast), this protein is Geranylgeranyl transferase type-2 subunit alpha (BET4).